A 152-amino-acid polypeptide reads, in one-letter code: Type-1 angiotensin II receptor-associated protein (152 aa).

Topologically, residues 1-23 (MELPAVNLKVILLGHWLLTTWGC) are extracellular. Residues 24 to 44 (IVFSGSYAWANFTILALGVWA) form a helical membrane-spanning segment. At 45 to 55 (VAQRDSIDAIS) the chain is on the cytoplasmic side. The helical transmembrane segment at 56–76 (MFLGGLLATIFLDIVHISIFY) threads the bilayer. The Extracellular segment spans residues 77-86 (PRAGLTDTGR). A helical transmembrane segment spans residues 87-107 (FGAGMAILSLLLKPLSCCFVY). Over 108–152 (HMYRQRGGFLGSSQDRSAYQTIDSAEAPANAFAVPEGRGQDARGY) the chain is Cytoplasmic. Phosphoserine is present on residues Ser119 and Ser120. Residue Thr128 is modified to Phosphothreonine. The residue at position 131 (Ser131) is a Phosphoserine.

As to quaternary structure, interacts with RACK1, and with the carboxy-terminal region of AGTR1.

Its subcellular location is the endoplasmic reticulum membrane. The protein resides in the golgi apparatus membrane. It localises to the cytoplasmic vesicle membrane. Appears to be a negative regulator of type-1 angiotensin II receptor-mediated signaling by regulating receptor internalization as well as mechanism of receptor desensitization such as phosphorylation. Also induces a decrease in cell proliferation and angiotensin II-stimulated transcriptional activity. The protein is Type-1 angiotensin II receptor-associated protein (AGTRAP) of Pongo abelii (Sumatran orangutan).